Consider the following 559-residue polypeptide: Sesquiterpene synthase TPS3 (559 aa).

The (2E,6E)-farnesyl diphosphate site is built by Arg275, Asp312, Asp316, Arg453, and Asp456. Mg(2+) is bound by residues Asp312 and Asp316. The DDXXD motif signature appears at 312-316 (DDTYD). Residues Asp456, Thr460, and Glu464 each contribute to the Mg(2+) site.

It belongs to the terpene synthase family. Tpsa subfamily. In terms of assembly, monomer. Mg(2+) serves as cofactor. In terms of tissue distribution, highly expressed in glandular trichomes. Expressed in roots and leaves.

Its subcellular location is the cytoplasm. The enzyme catalyses (2E,6E)-farnesyl diphosphate = (+)-(R)-germacrene A + diphosphate. The protein operates within secondary metabolite biosynthesis; terpenoid biosynthesis. Its function is as follows. Sesquiterpene synthase involved in the biosynthesis of volatile compounds. Mediates the conversion of (2E,6E)-farnesyl diphosphate (FPP) into (+)-(R)-germacrene A. This chain is Sesquiterpene synthase TPS3, found in Xanthium strumarium (Rough cocklebur).